The primary structure comprises 395 residues: MRN complex-interacting protein (395 aa).

Over residues 90-100 (DPKSEQEEAHV) the composition is skewed to basic and acidic residues. Disordered stretches follow at residues 90 to 155 (DPKS…GGNC) and 180 to 275 (KRSS…FGES). The span at 104-113 (SKYTDQTTEG) shows a compositional bias: polar residues. The segment covering 117–127 (EKDDEDEDENV) has biased composition (acidic residues). A Nuclear localization signal (NLS) motif is present at residues 142–145 (RKKM). Low complexity predominate over residues 183–195 (SSSWNKGSVSKYS). Polar residues-rich tracts occupy residues 224-244 (ACSS…QIKS) and 260-270 (QSESPSVSSHQ).

Belongs to the MRNIP family.

The protein localises to the nucleus. The protein resides in the nucleoplasm. In terms of biological role, plays a role in the cellular response to DNA damage and the maintenance of genome stability through its association with the MRN damage-sensing complex. Promotes chromatin loading and activity of the MRN complex to facilitate subsequent ATM-mediated DNA damage response signaling and DNA repair. The sequence is that of MRN complex-interacting protein from Danio rerio (Zebrafish).